The primary structure comprises 627 residues: ATP-dependent zinc metalloprotease FtsH 2 (627 aa).

The Cytoplasmic segment spans residues 1–7; sequence MKFSWRT. The chain crosses the membrane as a helical span at residues 8 to 28; that stretch reads ALLWSLPLLVVGFFFWQGSFG. Residues 29–117 lie on the Lumenal side of the membrane; sequence GADANLGSNT…SHPVRNNGMV (89 aa). Residues 118–138 traverse the membrane as a helical segment; the sequence is WGFVGNLIFPVLLIASLFFLF. The Cytoplasmic segment spans residues 139-627; it reads RRSSNMPGGP…PVKEQLIPQL (489 aa). Position 212-219 (212-219) interacts with ATP; it reads GPPGTGKT. His-433 serves as a coordination point for Zn(2+). Residue Glu-434 is part of the active site. Zn(2+) is bound by residues His-437 and Asp-511.

This sequence in the central section; belongs to the AAA ATPase family. It in the C-terminal section; belongs to the peptidase M41 family. Homohexamer (Potential). Part of a large (&gt;500 kDa) complex that includes FtsH3 and PSII. Coimmunoprecipitates with YidC. The cofactor is Zn(2+).

Its subcellular location is the cellular thylakoid membrane. Acts as a processive, ATP-dependent zinc metallopeptidase for both cytoplasmic and membrane proteins. Plays a role in the quality control of integral membrane proteins. In terms of biological role, plays a role in the selective replacement of photosystem II (PSII) protein D1 in the PSII repair cycle following visible-light and UV-B induced damage. If damaged D1 is not removed then new D1 cannot be inserted to restore the PSII reaction center. Seems to also degrade damaged and/or unassembled PSII proteins D2 and PsbB (CP47). May recognize D1 via its first 20 amino acids, as deletion of these prevents the PSII repair cycle. Also seems to degrade cytoplasmic GGPS, glucosylglycerol-phosphate synthase. The polypeptide is ATP-dependent zinc metalloprotease FtsH 2 (ftsH2) (Synechocystis sp. (strain ATCC 27184 / PCC 6803 / Kazusa)).